The following is a 238-amino-acid chain: Orotidine 5'-phosphate decarboxylase (238 aa).

Substrate contacts are provided by residues Asp-10, Lys-32, 59-68 (DLKLHDIPNT), Thr-122, Arg-184, Gln-193, Gly-213, and Arg-214. Lys-61 functions as the Proton donor in the catalytic mechanism.

This sequence belongs to the OMP decarboxylase family. Type 1 subfamily. Homodimer.

The enzyme catalyses orotidine 5'-phosphate + H(+) = UMP + CO2. It participates in pyrimidine metabolism; UMP biosynthesis via de novo pathway; UMP from orotate: step 2/2. Its function is as follows. Catalyzes the decarboxylation of orotidine 5'-monophosphate (OMP) to uridine 5'-monophosphate (UMP). The polypeptide is Orotidine 5'-phosphate decarboxylase (Bacillus cytotoxicus (strain DSM 22905 / CIP 110041 / 391-98 / NVH 391-98)).